A 119-amino-acid chain; its full sequence is MIQKNKNFATAKAKSIRVSPRKLNLVASFIRNMKVSEALVQLTFSPKRIAKIVKDCLQSAIANAENNLGLDIDRLIITKATVGKSVVMKRIMPRAKGRATRINKFFSNLYITVTEKEDN.

This sequence belongs to the universal ribosomal protein uL22 family. Part of the 50S ribosomal subunit.

Functionally, this protein binds specifically to 23S rRNA; its binding is stimulated by other ribosomal proteins, e.g. L4, L17, and L20. It is important during the early stages of 50S assembly. It makes multiple contacts with different domains of the 23S rRNA in the assembled 50S subunit and ribosome. In terms of biological role, the globular domain of the protein is located near the polypeptide exit tunnel on the outside of the subunit, while an extended beta-hairpin is found that lines the wall of the exit tunnel in the center of the 70S ribosome. This is Large ribosomal subunit protein uL22 from Rickettsia prowazekii (strain Madrid E).